The primary structure comprises 182 residues: Peptidyl-prolyl cis-trans isomerase H (182 aa).

One can recognise a PPIase cyclophilin-type domain in the interval 15–181 (FFDITIGGEP…LDVVISQCGE (167 aa)).

Belongs to the cyclophilin-type PPIase family. PPIase H subfamily.

It localises to the nucleus. It catalyses the reaction [protein]-peptidylproline (omega=180) = [protein]-peptidylproline (omega=0). PPIases accelerate the folding of proteins. It catalyzes the cis-trans isomerization of proline imidic peptide bonds in oligopeptides. This chain is Peptidyl-prolyl cis-trans isomerase H (CYP3), found in Gibberella zeae (strain ATCC MYA-4620 / CBS 123657 / FGSC 9075 / NRRL 31084 / PH-1) (Wheat head blight fungus).